A 370-amino-acid polypeptide reads, in one-letter code: Queuine tRNA-ribosyltransferase (370 aa).

Aspartate 89 (proton acceptor) is an active-site residue. Residues 89–93 (DSGGF), aspartate 143, glutamine 187, and glycine 214 each bind substrate. The interval 245–251 (GVGKPED) is RNA binding. Aspartate 264 serves as the catalytic Nucleophile. The segment at 269–273 (TRNAR) is RNA binding; important for wobble base 34 recognition. Zn(2+)-binding residues include cysteine 302, cysteine 304, cysteine 307, and histidine 333.

Belongs to the queuine tRNA-ribosyltransferase family. As to quaternary structure, homodimer. Within each dimer, one monomer is responsible for RNA recognition and catalysis, while the other monomer binds to the replacement base PreQ1. The cofactor is Zn(2+).

It catalyses the reaction 7-aminomethyl-7-carbaguanine + guanosine(34) in tRNA = 7-aminomethyl-7-carbaguanosine(34) in tRNA + guanine. Its pathway is tRNA modification; tRNA-queuosine biosynthesis. Its function is as follows. Catalyzes the base-exchange of a guanine (G) residue with the queuine precursor 7-aminomethyl-7-deazaguanine (PreQ1) at position 34 (anticodon wobble position) in tRNAs with GU(N) anticodons (tRNA-Asp, -Asn, -His and -Tyr). Catalysis occurs through a double-displacement mechanism. The nucleophile active site attacks the C1' of nucleotide 34 to detach the guanine base from the RNA, forming a covalent enzyme-RNA intermediate. The proton acceptor active site deprotonates the incoming PreQ1, allowing a nucleophilic attack on the C1' of the ribose to form the product. After dissociation, two additional enzymatic reactions on the tRNA convert PreQ1 to queuine (Q), resulting in the hypermodified nucleoside queuosine (7-(((4,5-cis-dihydroxy-2-cyclopenten-1-yl)amino)methyl)-7-deazaguanosine). In Baumannia cicadellinicola subsp. Homalodisca coagulata, this protein is Queuine tRNA-ribosyltransferase.